The primary structure comprises 88 residues: Small ribosomal subunit protein uS17 (88 aa).

It belongs to the universal ribosomal protein uS17 family. As to quaternary structure, part of the 30S ribosomal subunit.

In terms of biological role, one of the primary rRNA binding proteins, it binds specifically to the 5'-end of 16S ribosomal RNA. The chain is Small ribosomal subunit protein uS17 from Pseudomonas entomophila (strain L48).